A 72-amino-acid polypeptide reads, in one-letter code: EAGEECDCGAPANPCCDAATCKLRPGAQCAEGLCCDQCRFMKEGTVCHRARGDDVDDYCNGISAGCPRNPFH.

In terms of domain architecture, Disintegrin spans 1–72 (EAGEECDCGA…SAGCPRNPFH (72 aa)). Disulfide bonds link Cys6/Cys21, Cys8/Cys16, Cys15/Cys38, Cys29/Cys35, Cys34/Cys59, and Cys47/Cys66. The Cell attachment site signature appears at 51 to 53 (RGD).

Belongs to the venom metalloproteinase (M12B) family. P-II subfamily. P-IIa sub-subfamily. As to quaternary structure, monomer. In terms of tissue distribution, expressed by the venom gland.

Its subcellular location is the secreted. Inhibits ADP- (IC(50)=66 nM) and collagen-induced (IC(50)=100 nM) aggregation of human platelets. In vitro, inhibits adhesion of endothelial cells to vitronectin, type-I collagen and, to a lower degree, fibronectin and laminin. This is Disintegrin sasaimin from Cerrophidion sasai (Costa Rica montane pitviper).